We begin with the raw amino-acid sequence, 696 residues long: MKAPIPHLILLYATFTQSLKVVTKRGSADGCTDWSIDIKKYQVLVGEPVRIKCALFYGYIRTNYSLAQSAGLSLMWYKSSGPGDFEEPIAFDGSRMSKEEDSIWFRPTLLQDSGLYACVIRNSTYCMKVSISLTVGENDTGLCYNSKMKYFEKAELSKSKEISCRDIEDFLLPTREPEILWYKECRTKTWRPSIVFKRDTLLIREVREDDIGNYTCELKYGGFVVRRTTELTVTAPLTDKPPKLLYPVESKLTIQETQLGDSANLTCRAFFGYSGDVSPLIYWMKGEKFIEDLDENRVWESDIRILKEHLGEQEVSISLIVDSVEEGDLGNYSCYVENGNGRRHASVLLHKRELMYTVELAGGLGAILLLLVCLVTIYKCYKIEIMLFYRNHFGAEELDGDNKDYDAYLSYTKVDPDQWNQETGEEERFALEILPDMLEKHYGYKLFIPDRDLIPTGTYIEDVARCVDQSKRLIIVMTPNYVVRRGWSIFELETRLRNMLVTGEIKVILIECSELRGIMNYQEVEALKHTIKLLTVIKWHGPKCNKLNSKFWKRLQYEMPFKRIEPITHEQALDVSEQGPFGELQTVSAISMAAATSTALATAHPDLRSTFHNTYHSQMRQKHYYRSYEYDVPPTGTLPLTSIGNQHTYCNIPMTLINGQRPQTKSSREQNPDEAHTNSAILPLLPRETSISSVIW.

The signal sequence occupies residues 1–18 (MKAPIPHLILLYATFTQS). The 116-residue stretch at 19 to 134 (LKVVTKRGSA…YCMKVSISLT (116 aa)) folds into the Ig-like 1 domain. At 19–357 (LKVVTKRGSA…LLHKRELMYT (339 aa)) the chain is on the extracellular side. 2 disulfide bridges follow: cysteine 31-cysteine 126 and cysteine 53-cysteine 118. Asparagine 63, asparagine 122, and asparagine 138 each carry an N-linked (GlcNAc...) asparagine glycan. 2 disulfides stabilise this stretch: cysteine 143–cysteine 185 and cysteine 164–cysteine 216. 2 consecutive Ig-like domains span residues 143-232 (CYNS…TELT) and 242-350 (PKLL…VLLH). Residues asparagine 213, asparagine 264, and asparagine 331 are each glycosylated (N-linked (GlcNAc...) asparagine). Cysteine 267 and cysteine 334 are oxidised to a cystine. A helical membrane pass occupies residues 358 to 378 (VELAGGLGAILLLLVCLVTIY). At 379–696 (KCYKIEIMLF…RETSISSVIW (318 aa)) the chain is on the cytoplasmic side. The 157-residue stretch at 403–559 (KDYDAYLSYT…KFWKRLQYEM (157 aa)) folds into the TIR domain. Residue glutamate 491 is part of the active site. The interval 549–644 (SKFWKRLQYE…TGTLPLTSIG (96 aa)) is interaction with NCS1. Residues 659 to 680 (GQRPQTKSSREQNPDEAHTNSA) are disordered. Over residues 666 to 676 (SSREQNPDEAH) the composition is skewed to basic and acidic residues.

Belongs to the interleukin-1 receptor family. In terms of assembly, homodimer. Interacts (calcium-independent) with NCS1/FREQ. Interacts (via the first immunoglobilin domain) with PTPRD (via the second immunoglobilin domain); this interaction is PTPRD-splicing-dependent and induces pre- and post-synaptic differentiation of neurons and is required for IL1RAPL1-mediated synapse formation.

The protein resides in the cell membrane. It is found in the cytoplasm. Its subcellular location is the cell projection. The protein localises to the axon. It localises to the dendrite. The catalysed reaction is NAD(+) + H2O = ADP-D-ribose + nicotinamide + H(+). Functionally, may regulate secretion and presynaptic differentiation through inhibition of the activity of N-type voltage-gated calcium channel. May activate the MAP kinase JNK. Plays a role in neurite outgrowth. During dendritic spine formation can bidirectionally induce pre- and post-synaptic differentiation of neurons by trans-synaptically binding to PTPRD. The sequence is that of Interleukin-1 receptor accessory protein-like 1 (IL1RAPL1) from Pongo pygmaeus (Bornean orangutan).